The chain runs to 77 residues: uncharacterized protein (77 aa).

The segment at histidine 54–leucine 77 is disordered. A compositionally biased stretch (basic and acidic residues) spans histidine 59–leucine 70.

This is an uncharacterized protein from Escherichia coli O157:H7.